We begin with the raw amino-acid sequence, 26 residues long: Mitochondrial import receptor subunit TOM7-2 (26 aa).

This sequence belongs to the Tom7 family. In terms of assembly, forms part of the preprotein translocase complex of the outer mitochondrial membrane (TOM complex).

It is found in the mitochondrion outer membrane. Seems to act as a modulator of the dynamics of the mitochondrial protein transport machinery. Seems to promote the dissociation of subunits of the outer membrane translocase. The polypeptide is Mitochondrial import receptor subunit TOM7-2 (TOM7-2) (Solanum tuberosum (Potato)).